Here is a 759-residue protein sequence, read N- to C-terminus: Putative ATP-dependent DNA helicase YjcD (759 aa).

The interval 68 to 121 (ACEPKPSKEGKKEDDQESGVIRLPKGKAIAADPSPAVTEWHRPRSIKPGTPFVP) is disordered. Positions 69-81 (CEPKPSKEGKKED) are enriched in basic and acidic residues. The region spanning 134–413 (VGLNTDQLKA…IYLTANYRST (280 aa)) is the UvrD-like helicase ATP-binding domain. ATP-binding positions include 158–163 (GSGKTR) and arginine 411. Residues 414 to 676 (HPIVSSADIV…QLMTIHRSKG (263 aa)) enclose the UvrD-like helicase C-terminal domain.

This sequence belongs to the helicase family. UvrD subfamily.

Its subcellular location is the cytoplasm. It catalyses the reaction Couples ATP hydrolysis with the unwinding of duplex DNA by translocating in the 3'-5' direction.. The catalysed reaction is ATP + H2O = ADP + phosphate + H(+). In terms of biological role, may be involved in the generation of recombinogenic substrates for the subsequent action of RecA. The sequence is that of Putative ATP-dependent DNA helicase YjcD (yjcD) from Bacillus subtilis (strain 168).